A 211-amino-acid chain; its full sequence is Cytochrome c biogenesis ATP-binding export protein CcmA (211 aa).

The ABC transporter domain occupies 6–211 (LQTVALACER…RDIDLGNWAV (206 aa)). 38–45 (GPNGSGKT) provides a ligand contact to ATP.

The protein belongs to the ABC transporter superfamily. CcmA exporter (TC 3.A.1.107) family. The complex is composed of two ATP-binding proteins (CcmA) and two transmembrane proteins (CcmB).

Its subcellular location is the cell inner membrane. It carries out the reaction heme b(in) + ATP + H2O = heme b(out) + ADP + phosphate + H(+). Its function is as follows. Part of the ABC transporter complex CcmAB involved in the biogenesis of c-type cytochromes; once thought to export heme, this seems not to be the case, but its exact role is uncertain. Responsible for energy coupling to the transport system. The chain is Cytochrome c biogenesis ATP-binding export protein CcmA from Pseudomonas fluorescens (strain Pf0-1).